The following is a 142-amino-acid chain: Large ribosomal subunit protein uL13 (142 aa).

It belongs to the universal ribosomal protein uL13 family. In terms of assembly, part of the 50S ribosomal subunit.

Functionally, this protein is one of the early assembly proteins of the 50S ribosomal subunit, although it is not seen to bind rRNA by itself. It is important during the early stages of 50S assembly. In Acidovorax sp. (strain JS42), this protein is Large ribosomal subunit protein uL13.